We begin with the raw amino-acid sequence, 175 residues long: CEN-like protein 4 (175 aa).

This sequence belongs to the phosphatidylethanolamine-binding protein family. Expressed in vegetative axillary meristems but not in the main shoot meristem.

Its subcellular location is the cytoplasm. May form complexes with phosphorylated ligands by interfering with kinases and their effectors. This is CEN-like protein 4 (CET4) from Nicotiana tabacum (Common tobacco).